A 263-amino-acid chain; its full sequence is Small ribosomal subunit protein bS1c (263 aa).

3 consecutive S1 motif domains span residues 27-96 (GDIV…LSIR), 114-178 (DSLL…LSHR), and 192-260 (GNII…LSMK).

Belongs to the bacterial ribosomal protein bS1 family.

The protein resides in the plastid. It localises to the chloroplast. This Porphyra purpurea (Red seaweed) protein is Small ribosomal subunit protein bS1c (rps1).